The primary structure comprises 355 residues: UDP-N-acetylglucosamine--N-acetylmuramyl-(pentapeptide) pyrophosphoryl-undecaprenol N-acetylglucosamine transferase (355 aa).

UDP-N-acetyl-alpha-D-glucosamine-binding positions include 15 to 17 (TGG), asparagine 127, arginine 163, serine 191, isoleucine 244, 263 to 268 (ALTVSE), and glutamine 288.

The protein belongs to the glycosyltransferase 28 family. MurG subfamily.

It is found in the cell inner membrane. It carries out the reaction di-trans,octa-cis-undecaprenyl diphospho-N-acetyl-alpha-D-muramoyl-L-alanyl-D-glutamyl-meso-2,6-diaminopimeloyl-D-alanyl-D-alanine + UDP-N-acetyl-alpha-D-glucosamine = di-trans,octa-cis-undecaprenyl diphospho-[N-acetyl-alpha-D-glucosaminyl-(1-&gt;4)]-N-acetyl-alpha-D-muramoyl-L-alanyl-D-glutamyl-meso-2,6-diaminopimeloyl-D-alanyl-D-alanine + UDP + H(+). Its pathway is cell wall biogenesis; peptidoglycan biosynthesis. Its function is as follows. Cell wall formation. Catalyzes the transfer of a GlcNAc subunit on undecaprenyl-pyrophosphoryl-MurNAc-pentapeptide (lipid intermediate I) to form undecaprenyl-pyrophosphoryl-MurNAc-(pentapeptide)GlcNAc (lipid intermediate II). This is UDP-N-acetylglucosamine--N-acetylmuramyl-(pentapeptide) pyrophosphoryl-undecaprenol N-acetylglucosamine transferase from Escherichia coli (strain 55989 / EAEC).